We begin with the raw amino-acid sequence, 302 residues long: Glycine--tRNA ligase alpha subunit (302 aa).

It belongs to the class-II aminoacyl-tRNA synthetase family. In terms of assembly, tetramer of two alpha and two beta subunits.

It is found in the cytoplasm. It carries out the reaction tRNA(Gly) + glycine + ATP = glycyl-tRNA(Gly) + AMP + diphosphate. The sequence is that of Glycine--tRNA ligase alpha subunit from Wigglesworthia glossinidia brevipalpis.